The sequence spans 330 residues: Atypical chemokine receptor 1 (330 aa).

Residues 1-57 (MGNCLYPVADDNSTKLAIKEDFLIDFPEDYYPDYNETDVEAAAPCHSCSLLNYSSLP) lie on the Extracellular side of the membrane. 3 N-linked (GlcNAc...) asparagine glycosylation sites follow: Asn-12, Asn-35, and Asn-52. Disulfide bonds link Cys-45-Cys-270 and Cys-123-Cys-189. The helical transmembrane segment at 58–78 (FFILVSILGILASGTILYALL) threads the bilayer. Residues 79 to 89 (RPLFRWQLYQD) are Cytoplasmic-facing. The chain crosses the membrane as a helical span at residues 90–110 (RSTLVQLAVGSALFSIVVPIL). Over 111–123 (ARGLSGALITSLC) the chain is Extracellular. A helical membrane pass occupies residues 124-147 (HLAHLVAYGSAFAQALLIGYHACL). Over 148-160 (GPQLGAGQVPGLR) the chain is Cytoplasmic. A helical transmembrane segment spans residues 161–181 (LGVTVGLWGVAALLSLPVVLG). The Extracellular portion of the chain corresponds to 182–201 (SDTSQGLCTVTFSGEWETLR). The helical transmembrane segment at 202–222 (YIHAAACFAIFVLLPLGLLGT) threads the bilayer. The Cytoplasmic portion of the chain corresponds to 223–238 (KGLKTVLGRAPCPWVD). Residues 239–259 (VLWVWFIFWWPQGMTLGLDSL) form a helical membrane-spanning segment. Residues 260–281 (VRSKAIVVSTCPAQQALDMLLD) lie on the Extracellular side of the membrane. Residues 282–302 (VAEALAILHCVATPLLLAWVC) traverse the membrane as a helical segment. Over 303–330 (YQATHTSPPSLPLPTTQTSHLDTLGGKS) the chain is Cytoplasmic.

The protein belongs to the G-protein coupled receptor 1 family. Atypical chemokine receptor subfamily.

The protein resides in the early endosome. The protein localises to the recycling endosome. Its subcellular location is the membrane. Atypical chemokine receptor that controls chemokine levels and localization via high-affinity chemokine binding that is uncoupled from classic ligand-driven signal transduction cascades, resulting instead in chemokine sequestration, degradation, or transcytosis. Also known as interceptor (internalizing receptor) or chemokine-scavenging receptor or chemokine decoy receptor. Has a promiscuous chemokine-binding profile, interacting with inflammatory chemokines of both the CXC and the CC subfamilies but not with homeostatic chemokines. Acts as a receptor for chemokines including CCL2, CCL5, CCL7, CCL11, CCL13, CCL14, CCL17, CXCL5, CXCL6, IL8/CXCL8, CXCL11, GRO, RANTES, MCP-1 and TARC. May regulate chemokine bioavailability and, consequently, leukocyte recruitment through two distinct mechanisms: when expressed in endothelial cells, it sustains the abluminal to luminal transcytosis of tissue-derived chemokines and their subsequent presentation to circulating leukocytes; when expressed in erythrocytes, serves as blood reservoir of cognate chemokines but also as a chemokine sink, buffering potential surges in plasma chemokine levels. In Bos taurus (Bovine), this protein is Atypical chemokine receptor 1 (ACKR1).